Reading from the N-terminus, the 558-residue chain is Podocalyxin (558 aa).

The N-terminal stretch at 1–22 (MRCALALSALLLLLSTPPLLPS) is a signal peptide. The span at 20–29 (LPSSPSPSPS) shows a compositional bias: pro residues. Disordered stretches follow at residues 20–50 (LPSS…PTPA), 83–210 (LGVS…DHLM), and 270–338 (SVIS…VAHE). Residues 23–461 (SPSPSPSPSQ…EEAEDRFSMP (439 aa)) are Extracellular-facing. Polar residues-rich tracts occupy residues 32-50 (QNAT…PTPA) and 83-107 (LGVS…NTTV). 3 N-linked (GlcNAc...) asparagine glycosylation sites follow: Asn33, Asn43, and Asn104. Residues 125-142 (STKSADTTTVATSTATAK) are compositionally biased toward low complexity. Composition is skewed to polar residues over residues 143-173 (PNTT…LTST), 190-204 (RQPT…PTSS), and 270-302 (SVIS…TSPA). A glycan (N-linked (GlcNAc...) asparagine) is linked at Asn144. Positions 313 to 324 (TMSSSPTAASTT) are enriched in low complexity. Asn360 carries an N-linked (GlcNAc...) asparagine glycan. The helical transmembrane segment at 462-482 (LIITIVCMASFLLLVAALYGC) threads the bilayer. The Cytoplasmic segment spans residues 483–558 (CHQRLSQRKD…DLDEEEDTHL (76 aa)). Thr518 bears the Phosphothreonine mark. Residues Ser529 and Ser537 each carry the phosphoserine modification. Thr556 carries the phosphothreonine modification.

Belongs to the podocalyxin family. Monomer; when associated with the membrane raft. Oligomer; when integrated in the apical membrane. Interacts (via the C-terminal PDZ-binding motif DTHL) with NHERF1 (via the PDZ domains); the interaction is not detected in glomerular epithelium cells, take place early in the secretory pathway and is necessary for its apical membrane sorting. Found in a complex with EZR, PODXL and NHERF2. Associates with the actin cytoskeleton through complex formation with EZR and NHERF2. Interacts (via the C-terminal PDZ-binding motif DTHL) with NHERF2 (via the PDZ 1 domain); interaction is detected in glomerular epithelium cells. Interacts with EZR. N- and O-linked glycosylated. Sialoglycoprotein. As to expression, glomerular epithelium cell (podocyte).

It localises to the apical cell membrane. The protein resides in the cell projection. It is found in the lamellipodium. The protein localises to the filopodium. Its subcellular location is the ruffle. It localises to the microvillus. The protein resides in the membrane raft. It is found in the membrane. Functionally, involved in the regulation of both adhesion and cell morphology and cancer progression. Functions as an anti-adhesive molecule that maintains an open filtration pathway between neighboring foot processes in the podocyte by charge repulsion. Acts as a pro-adhesive molecule, enhancing the adherence of cells to immobilized ligands, increasing the rate of migration and cell-cell contacts in an integrin-dependent manner. Induces the formation of apical actin-dependent microvilli. Involved in the formation of a preapical plasma membrane subdomain to set up initial epithelial polarization and the apical lumen formation during renal tubulogenesis. Plays a role in cancer development and aggressiveness by inducing cell migration and invasion through its interaction with the actin-binding protein EZR. Affects EZR-dependent signaling events, leading to increased activities of the MAPK and PI3K pathways in cancer cells. This Homo sapiens (Human) protein is Podocalyxin (PODXL).